Reading from the N-terminus, the 116-residue chain is Vesicle-associated membrane protein 2 (116 aa).

The tract at residues 1–33 is disordered; it reads MSATAATAPPAAPAGEGGPPAPPPNLTSNRRLQ. S2 carries the post-translational modification N-acetylserine. Residues 2–94 are Cytoplasmic-facing; that stretch reads SATAATAPPA…KRKYWWKNLK (93 aa). Positions 31 to 91 constitute a v-SNARE coiled-coil homology domain; that stretch reads RLQQTQAQVD…AKLKRKYWWK (61 aa). The tract at residues 92–116 is required for interaction with SEPT8; the sequence is NLKMMIILGVICAIILIIIIVYFST. The chain crosses the membrane as a helical; Anchor for type IV membrane protein span at residues 95–114; sequence MMIILGVICAIILIIIIVYF. Residues 115 to 116 lie on the Vesicular side of the membrane; sequence ST.

It belongs to the synaptobrevin family. In terms of assembly, part of the SNARE core complex containing SNAP25, VAMP2 and STX1A; this complex constitutes the basic catalytic machinery of the complex neurotransmitter release apparatus. Recruited to the SNARE complex following binding of the SNARE complex component STX1A to STXBP1. This complex binds to CPLX1. Interacts with POPDC1 and STX4. Interacts with VAPA and VAPB. Interacts with WDFY2, PRKCZ and PRKCI. Forms a complex with WDFY2 and PRKCZ. Interacts (via N-terminus) with KCNB1 (via N-terminus and C-terminus); stimulates the channel inactivation rate of KCNB1. Interacts with SEPT8; the interaction inhibits interaction of VAMP2 with SYP. Interacts with SYP; the interaction is inhibited by interaction with SEPT8. Interacts with PICALM. Interacts with alpha-synuclein/SNCA. Interacts with STX3. Phosphorylated by PRKCZ in vitro and this phosphorylation is increased in the presence of WDFY2. Post-translationally, (Microbial infection) Targeted and hydrolyzed by C.botulinum neurotoxin type B (BoNT/B, botB) which hydrolyzes the 76-Gln-|-Phe-77 bond and probably inhibits neurotransmitter release. In terms of processing, (Microbial infection) Targeted and hydrolyzed by C.botulinum neurotoxin type D (BoNT/D, botD) which probably hydrolyzes the 59-Lys-|-Leu-60 bond and inhibits neurotransmitter release. Note that humans are not known to be infected by C.botulinum type D. (Microbial infection) Targeted and hydrolyzed by C.botulinum neurotoxin type F (BoNT/F, botF) which hydrolyzes the 58-Gln-|-Lys-59 bond and probably inhibits neurotransmitter release. Post-translationally, (Microbial infection) Targeted and hydrolyzed by C.tetani tetanus toxin (tetX) which hydrolyzes the 76-Gln-|-Phe-77 bond and probably inhibits neurotransmitter release. Nervous system and skeletal muscle.

The protein resides in the cytoplasmic vesicle. It is found in the secretory vesicle. Its subcellular location is the synaptic vesicle membrane. It localises to the cell membrane. Involved in the targeting and/or fusion of transport vesicles to their target membrane. Major SNARE protein of synaptic vesicles which mediates fusion of synaptic vesicles to release neurotransmitters. Essential for fast vesicular exocytosis and activity-dependent neurotransmitter release as well as fast endocytosis that mediates rapid reuse of synaptic vesicles. Modulates the gating characteristics of the delayed rectifier voltage-dependent potassium channel KCNB1. This is Vesicle-associated membrane protein 2 from Homo sapiens (Human).